A 347-amino-acid chain; its full sequence is Protease HtpX homolog (347 aa).

A run of 3 helical transmembrane segments spans residues isoleucine 8–alanine 28, alanine 46–valine 66, and tryptophan 76–alanine 96. Histidine 174 serves as a coordination point for Zn(2+). Residue glutamate 175 is part of the active site. Histidine 178 contacts Zn(2+). The next 2 helical transmembrane spans lie at alanine 185–valine 205 and leucine 221–leucine 241. Zn(2+) is bound at residue glutamate 248.

This sequence belongs to the peptidase M48B family. Zn(2+) is required as a cofactor.

It is found in the cell membrane. This Pyrobaculum islandicum (strain DSM 4184 / JCM 9189 / GEO3) protein is Protease HtpX homolog.